Here is a 199-residue protein sequence, read N- to C-terminus: dTTP/UTP pyrophosphatase (199 aa).

Aspartate 73 acts as the Proton acceptor in catalysis.

This sequence belongs to the Maf family. YhdE subfamily. Requires a divalent metal cation as cofactor.

The protein resides in the cytoplasm. The catalysed reaction is dTTP + H2O = dTMP + diphosphate + H(+). It catalyses the reaction UTP + H2O = UMP + diphosphate + H(+). Functionally, nucleoside triphosphate pyrophosphatase that hydrolyzes dTTP and UTP. May have a dual role in cell division arrest and in preventing the incorporation of modified nucleotides into cellular nucleic acids. In Caldicellulosiruptor bescii (strain ATCC BAA-1888 / DSM 6725 / KCTC 15123 / Z-1320) (Anaerocellum thermophilum), this protein is dTTP/UTP pyrophosphatase.